Here is a 473-residue protein sequence, read N- to C-terminus: Putative BTB/POZ domain-containing protein R765 (473 aa).

Positions 2–72 (TNIQLVIKDD…KIYDREITAD (71 aa)) constitute a BTB domain.

This sequence belongs to the mimivirus BTB/WD family.

The protein is Putative BTB/POZ domain-containing protein R765 of Acanthamoeba polyphaga mimivirus (APMV).